The sequence spans 169 residues: Gamma-crystallin 2 (169 aa).

2 consecutive Beta/gamma crystallin 'Greek key' domains span residues 1-34 and 35-77; these read YEDR…KVDS and GCWM…KVIP. The interval 78–82 is connecting peptide; sequence QQKGP. 2 Beta/gamma crystallin 'Greek key' domains span residues 83–123 and 124–166; these read HKMK…NVLE and GHWI…RRVL.

The protein belongs to the beta/gamma-crystallin family. As to quaternary structure, monomer.

Its function is as follows. Crystallins are the dominant structural components of the vertebrate eye lens. The polypeptide is Gamma-crystallin 2 (Rana temporaria (European common frog)).